The primary structure comprises 847 residues: Vacuolar membrane protease (847 aa).

Residues 1 to 17 (MQFGKSLLKHVYTRTFK) lie on the Cytoplasmic side of the membrane. The chain crosses the membrane as a helical span at residues 18 to 38 (SSLTCSIFAFTLLMIFFVLDW). At 39–348 (KRMNVYPRLD…GSYWQINLNL (310 aa)) the chain is on the vacuolar side. H146 and D158 together coordinate Zn(2+). The active-site Proton acceptor is the E190. Position 191 (E191) interacts with Zn(2+). N208 is a glycosylation site (N-linked (GlcNAc...) asparagine). Position 216 (E216) interacts with Zn(2+). N-linked (GlcNAc...) asparagine glycosylation occurs at N274. H291 provides a ligand contact to Zn(2+). A helical membrane pass occupies residues 349-369 (HLFLNVVFLIACPAILFMCLF). The Cytoplasmic portion of the chain corresponds to 370 to 381 (RFPSLYAQLKKP). Residues 382–402 (CYLICFTLSSLFVLIFDYVVV) form a helical membrane-spanning segment. Over 403–415 (QSLTKLNPYVIHS) the chain is Vacuolar. Residues 416–436 (SPDAVLAFFFLTNLLGLVYSF) traverse the membrane as a helical segment. At 437–454 (RYVATHSRMSNEELSCIE) the chain is on the cytoplasmic side. Residues 455 to 475 (IVLIWYVSMFWYISLLIATLT) traverse the membrane as a helical segment. The Vacuolar segment spans residues 476 to 482 (SIVRGLG). Residues 483–503 (SLYFVNFGFFCSFFCCILTLI) traverse the membrane as a helical segment. The Cytoplasmic portion of the chain corresponds to 504–560 (RVRYFVDRMVTINRPANPEQMPLVQSTSGNAYGTSRYPQHRLKAVVSKSASVKLNDN). The chain crosses the membrane as a helical span at residues 561 to 581 (LWSVLFFSCLVPLPLFTCYNL). At 582–605 (LSEVFIPAVHQSLIDGPYSNTCYK) the chain is on the vacuolar side. A helical membrane pass occupies residues 606 to 626 (FAVILVFMAIINSSPFVFRAL). Topologically, residues 627–630 (SKKS) are cytoplasmic. Residues 631-651 (SAILLMLWVSLLFNILRAEPF) form a helical membrane-spanning segment. Over 652–847 (NEKAPIKFRV…LLKMSKTHVM (196 aa)) the chain is Vacuolar. Residues N726, N734, N800, and N834 are each glycosylated (N-linked (GlcNAc...) asparagine).

This sequence belongs to the peptidase M28 family. Requires Zn(2+) as cofactor.

Its subcellular location is the vacuole membrane. Functionally, may be involved in vacuolar sorting and osmoregulation. This chain is Vacuolar membrane protease, found in Schizosaccharomyces japonicus (strain yFS275 / FY16936) (Fission yeast).